The following is a 427-amino-acid chain: Serine--tRNA ligase (427 aa).

231-233 is an L-serine binding site; sequence TAE. 262–264 is an ATP binding site; that stretch reads RSE. E285 contributes to the L-serine binding site. 349-352 lines the ATP pocket; the sequence is EISS. S385 contacts L-serine.

It belongs to the class-II aminoacyl-tRNA synthetase family. Type-1 seryl-tRNA synthetase subfamily. In terms of assembly, homodimer. The tRNA molecule binds across the dimer.

Its subcellular location is the cytoplasm. The catalysed reaction is tRNA(Ser) + L-serine + ATP = L-seryl-tRNA(Ser) + AMP + diphosphate + H(+). It catalyses the reaction tRNA(Sec) + L-serine + ATP = L-seryl-tRNA(Sec) + AMP + diphosphate + H(+). Its pathway is aminoacyl-tRNA biosynthesis; selenocysteinyl-tRNA(Sec) biosynthesis; L-seryl-tRNA(Sec) from L-serine and tRNA(Sec): step 1/1. Its function is as follows. Catalyzes the attachment of serine to tRNA(Ser). Is also able to aminoacylate tRNA(Sec) with serine, to form the misacylated tRNA L-seryl-tRNA(Sec), which will be further converted into selenocysteinyl-tRNA(Sec). The sequence is that of Serine--tRNA ligase from Rhizobium etli (strain ATCC 51251 / DSM 11541 / JCM 21823 / NBRC 15573 / CFN 42).